The chain runs to 381 residues: Homoserine O-succinyltransferase (381 aa).

One can recognise an AB hydrolase-1 domain in the interval 45–360 (NAVLVCHALN…PHGHDAFLLD (316 aa)). Ser-151 functions as the Nucleophile in the catalytic mechanism. Arg-221 is a binding site for substrate. Catalysis depends on residues Asp-321 and His-354. Substrate is bound at residue Asp-355.

It belongs to the AB hydrolase superfamily. MetX family. Homodimer.

It is found in the cytoplasm. It catalyses the reaction L-homoserine + succinyl-CoA = O-succinyl-L-homoserine + CoA. The protein operates within amino-acid biosynthesis; L-methionine biosynthesis via de novo pathway; O-succinyl-L-homoserine from L-homoserine: step 1/1. Transfers a succinyl group from succinyl-CoA to L-homoserine, forming succinyl-L-homoserine. This Burkholderia ambifaria (strain MC40-6) protein is Homoserine O-succinyltransferase.